Reading from the N-terminus, the 172-residue chain is Myosin regulatory light chain 12B (172 aa).

Basic residues predominate over residues 1–16 (MSSKKAKTKTTKKRPQ). The segment at 1–20 (MSSKKAKTKTTKKRPQRATS) is disordered. Thr19 is subject to Phosphothreonine; by MLCK and ZIPK/DAPK3. Ser20 bears the Phosphoserine; by MLCK and ZIPK/DAPK3 mark. 3 consecutive EF-hand domains span residues 29–64 (SQIQ…LGKN), 98–133 (DPED…MGDR), and 134–169 (FTDE…GAKD). Asp42, Asn44, Asp46, and Asp53 together coordinate Ca(2+).

Myosin is a hexamer of 2 heavy chains and 4 light chains: interacts with myosin heavy chain MYO19. Post-translationally, phosphorylation increases the actin-activated myosin ATPase activity and thereby regulates the contractile activity. It is required to generate the driving force in the migration of the cells but not necessary for localization of myosin-2 at the leading edge. Phosphorylation is reduced following epigallocatechin-3-O-gallate treatment. As to expression, ubiquitously expressed in various hematopoietic cells.

Myosin regulatory subunit that plays an important role in regulation of both smooth muscle and nonmuscle cell contractile activity via its phosphorylation. Phosphorylation triggers actin polymerization in vascular smooth muscle. Implicated in cytokinesis, receptor capping, and cell locomotion. The chain is Myosin regulatory light chain 12B (MYL12B) from Homo sapiens (Human).